Reading from the N-terminus, the 145-residue chain is ATP synthase epsilon chain (145 aa).

The protein belongs to the ATPase epsilon chain family. In terms of assembly, F-type ATPases have 2 components, CF(1) - the catalytic core - and CF(0) - the membrane proton channel. CF(1) has five subunits: alpha(3), beta(3), gamma(1), delta(1), epsilon(1). CF(0) has three main subunits: a, b and c.

Its subcellular location is the cell membrane. Produces ATP from ADP in the presence of a proton gradient across the membrane. This Buchnera aphidicola subsp. Baizongia pistaciae (strain Bp) protein is ATP synthase epsilon chain.